Consider the following 138-residue polypeptide: Large ribosomal subunit protein uL16c (138 aa).

Belongs to the universal ribosomal protein uL16 family. In terms of assembly, part of the 50S ribosomal subunit.

The protein localises to the plastid. Its subcellular location is the chloroplast. The polypeptide is Large ribosomal subunit protein uL16c (Tetradesmus obliquus (Green alga)).